The primary structure comprises 118 residues: GRB2-related adapter protein-like (118 aa).

Residues 1–58 (MESVALYSFQATESDELAFNKGDTLKILNMEDDQNWYKAELRGVEGFIPKNYIRVKPH) form the SH3 domain. Residues 60–118 (WYSGRISRQLAEEILMKRNHLGAFLIRESESSPGEFSVSVNNRAQRGPCLGPKSHSRLG) enclose the SH2 domain. Residues 89–118 (ESSPGEFSVSVNNRAQRGPCLGPKSHSRLG) form a disordered region. The segment covering 90–103 (SSPGEFSVSVNNRA) has biased composition (polar residues).

Belongs to the GRB2/sem-5/DRK family.

In Homo sapiens (Human), this protein is GRB2-related adapter protein-like (GRAPL).